The chain runs to 120 residues: Large ribosomal subunit protein uL18 (120 aa).

The protein belongs to the universal ribosomal protein uL18 family. In terms of assembly, part of the 50S ribosomal subunit; part of the 5S rRNA/L5/L18/L25 subcomplex. Contacts the 5S and 23S rRNAs.

Functionally, this is one of the proteins that bind and probably mediate the attachment of the 5S RNA into the large ribosomal subunit, where it forms part of the central protuberance. This chain is Large ribosomal subunit protein uL18, found in Trichodesmium erythraeum (strain IMS101).